The sequence spans 260 residues: Voltage-dependent calcium channel gamma-6 subunit (260 aa).

4 helical membrane passes run 43-63 (LLVA…EFWV), 143-163 (VIAV…IMVL), 169-189 (SLLR…FVSL), and 221-241 (LGCG…FLLL).

This sequence belongs to the PMP-22/EMP/MP20 family. CACNG subfamily. As to quaternary structure, interacts with CACNA1C. Identified in a complex with the L-type calcium channel subunits CACNA1C, CACNA2D1 and either CACNB1 or CACNB2. In terms of tissue distribution, detected in brain and heart (at protein level).

It localises to the cell membrane. Functionally, regulates the activity of L-type calcium channels that contain CACNA1C as pore-forming subunit. This Mus musculus (Mouse) protein is Voltage-dependent calcium channel gamma-6 subunit (Cacng6).